Reading from the N-terminus, the 39-residue chain is Photosystem II reaction center protein Y (39 aa).

A helical transmembrane segment spans residues 4–24 (RVIVVVSPLLIAATWAAINIG).

It belongs to the PsbY family. In terms of assembly, PSII is composed of 1 copy each of membrane proteins PsbA, PsbB, PsbC, PsbD, PsbE, PsbF, PsbH, PsbI, PsbJ, PsbK, PsbL, PsbM, PsbT, PsbX, PsbY, PsbZ, Psb30/Ycf12, peripheral proteins PsbO, CyanoQ (PsbQ), PsbU, PsbV and a large number of cofactors. It forms dimeric complexes.

Its subcellular location is the cellular thylakoid membrane. Loosely associated component of the core of photosystem II (PSII), it is not always seen in crystals. PSII is a light-driven water plastoquinone oxidoreductase, using light energy to abstract electrons from H(2)O, generating a proton gradient subsequently used for ATP formation. The sequence is that of Photosystem II reaction center protein Y from Synechocystis sp. (strain ATCC 27184 / PCC 6803 / Kazusa).